A 916-amino-acid polypeptide reads, in one-letter code: Rab3 GTPase-activating protein catalytic subunit (916 aa).

Positions 530 to 574 (NSKRKSEGMVGKASSEEEEDEDDDEGEFFDCDDLTAGAGSPTKAV) are disordered. 2 positions are modified to phosphoserine: Ser543 and Ser544. Over residues 545 to 562 (EEEEDEDDDEGEFFDCDD) the composition is skewed to acidic residues.

The protein belongs to the Rab3-GAP catalytic subunit family. As to quaternary structure, the Rab3 GTPase-activating complex is a heterodimer composed of Rab3GAP1 and Rab3-GAP.

The protein resides in the cytoplasm. Catalytic subunit of the Rab3 GTPase-activating (Rab3GAP) complex composed of Rab3-GAP and Rab3GAP1, which has both GTPase-activating protein (GAP) activity towards Rab3, and guanine nucleotide exchange factor (GEF) activity towards Rab18. As part of the Rab3GAP complex, required for the rapid induction and sustained expression of synaptic homeostasis at the neuromuscular junction (NMJ). Also participates in the regulation of autophagy in tissues such as larval fat cells and adult muscles. The Rab3GAP complex, acts as a GAP for Rab3 by converting active Rab3-GTP to the inactive form Rab3-GDP. At the neuromuscular junction (NMJ), forms a presynaptic signaling mechanism with Rab3 that regulates progression of synaptic homeostasis at a late stage of vesicle release. Within this mechanism Rab3-GTP acts, directly or indirectly, to inhibit the progression of synaptic homeostasis, and Rab3-GAP functions to inactivate this action of Rab3-GTP. The Rab3GAP complex, acts as a GEF for Rab18 by promoting the conversion of inactive Rab18-GDP to the active form Rab18-GTP. Regulates autophagy as part of a Rab3GAP-Rab18 module. Once Rab18 is activated by the GEF Rab3GAP complex, the Rab3GAP-Rab18 module localizes to autophagosomes, and regulates autolysosome formation and maturation together with the Rab18 interacting effector, the PI3K/Vps34 Complex I. This is Rab3 GTPase-activating protein catalytic subunit from Drosophila melanogaster (Fruit fly).